We begin with the raw amino-acid sequence, 572 residues long: Probable serine/threonine-protein kinase At1g54610 (572 aa).

Positions 1–89 (MGCVFGREAA…SNPSKHWRGE (89 aa)) are disordered. Residues 9 to 40 (AATTTTAEAKQAKSSKASSGVVVVGESSVTKS) show a composition bias toward low complexity. Residues 47–67 (DVEKKKNEEANGDKERKSSKG) are compositionally biased toward basic and acidic residues. A compositionally biased stretch (polar residues) spans 74–83 (KPNPRLSNPS). A Protein kinase domain is found at 118–402 (FEKIDKIGQG…ASAALKSEFF (285 aa)). ATP-binding positions include 124-132 (IGQGTYSNV) and Lys147. Asp242 functions as the Proton acceptor in the catalytic mechanism. Disordered stretches follow at residues 409–474 (CEPA…NVDR) and 526–572 (SSFN…AVVA). Residues 419-434 (PSKEIDAKRRDEETRR) are compositionally biased toward basic and acidic residues. The segment covering 554–572 (SRKKKDNTKSSKGKRAVVA) has biased composition (basic residues).

Belongs to the protein kinase superfamily. Ser/Thr protein kinase family.

It carries out the reaction L-seryl-[protein] + ATP = O-phospho-L-seryl-[protein] + ADP + H(+). It catalyses the reaction L-threonyl-[protein] + ATP = O-phospho-L-threonyl-[protein] + ADP + H(+). The protein is Probable serine/threonine-protein kinase At1g54610 of Arabidopsis thaliana (Mouse-ear cress).